The following is a 71-amino-acid chain: uncharacterized protein (71 aa).

The protein localises to the mitochondrion matrix. It localises to the kinetoplast. This is an uncharacterized protein from Trypanosoma brucei brucei.